A 220-amino-acid polypeptide reads, in one-letter code: Large ribosomal subunit protein uL16 (220 aa).

The protein belongs to the universal ribosomal protein uL16 family. In terms of assembly, component of the small ribosomal subunit. Mature ribosomes consist of a small (40S) and a large (60S) subunit. The 40S subunit contains about 33 different proteins and 1 molecule of RNA (18S). The 60S subunit contains about 49 different proteins and 3 molecules of RNA (25S, 5.8S and 5S).

The sequence is that of Large ribosomal subunit protein uL16 (RPL10) from Euphorbia esula (Leafy spurge).